The following is a 442-amino-acid chain: uncharacterized protein (442 aa).

The ABC transporter domain maps to methionine 1–aspartate 238. Position 33 to 40 (glycine 33 to threonine 40) interacts with ATP.

This sequence belongs to the ABC transporter superfamily. The complex is composed of two ATP-binding proteins (YvrA), two transmembrane proteins (YvrB) and a solute-binding protein (YvrC).

Functionally, probably part of an ABC transporter complex. Probably responsible for energy coupling to the transport system. This is an uncharacterized protein from Bacillus subtilis (strain 168).